Here is a 442-residue protein sequence, read N- to C-terminus: GTPase Der (442 aa).

EngA-type G domains lie at 3–167 (PTIV…PADD) and 177–350 (PRVA…AAAM). Residues 9-16 (GRPNVGKS), 56-60 (DTAGF), 119-122 (NKAE), 183-190 (GRPNVGKS), 230-234 (DTAGL), and 295-298 (NKWD) contribute to the GTP site. A KH-like domain is found at 351 to 435 (SNLSTPRLTR…PLRIQFRTAH (85 aa)).

The protein belongs to the TRAFAC class TrmE-Era-EngA-EngB-Septin-like GTPase superfamily. EngA (Der) GTPase family. In terms of assembly, associates with the 50S ribosomal subunit.

In terms of biological role, GTPase that plays an essential role in the late steps of ribosome biogenesis. This chain is GTPase Der, found in Azoarcus sp. (strain BH72).